The following is a 243-amino-acid chain: GrpE protein homolog, mitochondrial (243 aa).

Positions 56-79 (KKEEPKDENDAAAAEEDANLTEEQ) are disordered.

The protein belongs to the GrpE family. In terms of assembly, component of the PAM complex, at least composed of mtHsp70, MGE1, TIM44, PAM16, PAM17 and PAM18.

It localises to the mitochondrion matrix. Its function is as follows. Essential component of the PAM complex, a complex required for the translocation of transit peptide-containing proteins from the inner membrane into the mitochondrial matrix in an ATP-dependent manner. Seems to control the nucleotide-dependent binding of SSC1 to substrate proteins. This chain is GrpE protein homolog, mitochondrial (mge1), found in Kluyveromyces lactis (strain ATCC 8585 / CBS 2359 / DSM 70799 / NBRC 1267 / NRRL Y-1140 / WM37) (Yeast).